The following is a 526-amino-acid chain: Dolichyl pyrophosphate Glc1Man9GlcNAc2 alpha-1,3-glucosyltransferase (526 aa).

11 consecutive transmembrane segments (helical) span residues 4–24 (FGIATGGSNWFSALALGVTLL), 103–122 (LLFQRFSVIFTDALFVYAVH), 143–163 (FILSALLLWNFGLLIVDHIHF), 188–208 (GAFLFAVLLHFKHIYLYVAPA), 238–258 (LISLGLIVFLVSALSLGPFLA), 334–354 (PLATFICTLIAMLPSVFCLWC), 368–388 (LCALSSFMFGWHVHEKAILLA), 389–409 (VLPMSLLSVGKAVDASIFLIL), 427–449 (LPIKIILMLLFTIYSISSLKTLF), 461–481 (TFYLLGLGPLEVFCEFVFPFT), and 488–508 (PFIPLLLTSVYCAVGITYAWL).

Belongs to the ALG6/ALG8 glucosyltransferase family.

It localises to the endoplasmic reticulum membrane. It catalyses the reaction an alpha-D-Glc-(1-&gt;3)-alpha-D-Man-(1-&gt;2)-alpha-D-Man-(1-&gt;2)-alpha-D-Man-(1-&gt;3)-[alpha-D-Man-(1-&gt;2)-alpha-D-Man-(1-&gt;3)-[alpha-D-Man-(1-&gt;2)-alpha-D-Man-(1-&gt;6)]-alpha-D-Man-(1-&gt;6)]-beta-D-Man-(1-&gt;4)-beta-D-GlcNAc-(1-&gt;4)-alpha-D-GlcNAc-diphospho-di-trans,poly-cis-dolichol + a di-trans,poly-cis-dolichyl beta-D-glucosyl phosphate = an alpha-D-Glc-(1-&gt;3)-alpha-D-Glc-(1-&gt;3)-alpha-D-Man-(1-&gt;2)-alpha-D-Man-(1-&gt;2)-alpha-D-Man-(1-&gt;3)-[alpha-D-Man-(1-&gt;2)-alpha-D-Man-(1-&gt;3)-[alpha-D-Man-(1-&gt;2)-alpha-D-Man-(1-&gt;6)]-alpha-D-Man-(1-&gt;6)]-beta-D-Man-(1-&gt;4)-beta-D-GlcNAc-(1-&gt;4)-alpha-D-GlcNAc-diphospho-di-trans,poly-cis-dolichol + a di-trans,poly-cis-dolichyl phosphate + H(+). The protein operates within protein modification; protein glycosylation. Functionally, dolichyl pyrophosphate Glc1Man9GlcNAc2 alpha-1,3-glucosyltransferase that operates in the biosynthetic pathway of dolichol-linked oligosaccharides, the glycan precursors employed in protein asparagine (N)-glycosylation. The assembly of dolichol-linked oligosaccharides begins on the cytosolic side of the endoplasmic reticulum membrane and finishes in its lumen. The sequential addition of sugars to dolichol pyrophosphate produces dolichol-linked oligosaccharides containing fourteen sugars, including two GlcNAcs, nine mannoses and three glucoses. Once assembled, the oligosaccharide is transferred from the lipid to nascent proteins by oligosaccharyltransferases. In the lumen of the endoplasmic reticulum, adds the second glucose residue from dolichyl phosphate glucose (Dol-P-Glc) onto the lipid-linked oligosaccharide intermediate Glc(1)Man(9)GlcNAc(2)-PP-Dol to produce Glc(2)Man(9)GlcNAc(2)-PP-Dol. Glc(2)Man(9)GlcNAc(2)-PP-Dol is a substrate for ALG10, the following enzyme in the biosynthetic pathway. Required for PKD1/Polycystin-1 maturation and localization to the plasma membrane of the primary cilia. In Bos taurus (Bovine), this protein is Dolichyl pyrophosphate Glc1Man9GlcNAc2 alpha-1,3-glucosyltransferase.